The sequence spans 254 residues: Segregation and condensation protein A (254 aa).

The protein belongs to the ScpA family. As to quaternary structure, component of a cohesin-like complex composed of ScpA, ScpB and the Smc homodimer, in which ScpA and ScpB bind to the head domain of Smc. The presence of the three proteins is required for the association of the complex with DNA.

The protein resides in the cytoplasm. Its function is as follows. Participates in chromosomal partition during cell division. May act via the formation of a condensin-like complex containing Smc and ScpB that pull DNA away from mid-cell into both cell halves. The polypeptide is Segregation and condensation protein A (Brevibacillus brevis (strain 47 / JCM 6285 / NBRC 100599)).